Reading from the N-terminus, the 264-residue chain is Glutamate 5-kinase (264 aa).

Position 15 (lysine 15) interacts with ATP. Residues serine 55, aspartate 142, and asparagine 154 each contribute to the substrate site. ATP-binding positions include 174-175 (SD) and 216-222 (TGGIATK).

The protein belongs to the glutamate 5-kinase family.

The protein localises to the cytoplasm. It carries out the reaction L-glutamate + ATP = L-glutamyl 5-phosphate + ADP. The protein operates within amino-acid biosynthesis; L-proline biosynthesis; L-glutamate 5-semialdehyde from L-glutamate: step 1/2. Its function is as follows. Catalyzes the transfer of a phosphate group to glutamate to form L-glutamate 5-phosphate. In Alkaliphilus metalliredigens (strain QYMF), this protein is Glutamate 5-kinase.